Reading from the N-terminus, the 60-residue chain is DNA gyrase inhibitor YacG (60 aa).

Cys-15, Cys-18, Cys-30, and Cys-34 together coordinate Zn(2+).

Belongs to the DNA gyrase inhibitor YacG family. As to quaternary structure, interacts with GyrB. The cofactor is Zn(2+).

In terms of biological role, inhibits all the catalytic activities of DNA gyrase by preventing its interaction with DNA. Acts by binding directly to the C-terminal domain of GyrB, which probably disrupts DNA binding by the gyrase. The sequence is that of DNA gyrase inhibitor YacG from Bradyrhizobium diazoefficiens (strain JCM 10833 / BCRC 13528 / IAM 13628 / NBRC 14792 / USDA 110).